The primary structure comprises 420 residues: Serine hydroxymethyltransferase (420 aa).

Residues L117 and 121 to 123 contribute to the (6S)-5,6,7,8-tetrahydrofolate site; that span reads GHL. K226 carries the N6-(pyridoxal phosphate)lysine modification.

This sequence belongs to the SHMT family. In terms of assembly, homodimer. It depends on pyridoxal 5'-phosphate as a cofactor.

It localises to the cytoplasm. The catalysed reaction is (6R)-5,10-methylene-5,6,7,8-tetrahydrofolate + glycine + H2O = (6S)-5,6,7,8-tetrahydrofolate + L-serine. The protein operates within one-carbon metabolism; tetrahydrofolate interconversion. It functions in the pathway amino-acid biosynthesis; glycine biosynthesis; glycine from L-serine: step 1/1. Functionally, catalyzes the reversible interconversion of serine and glycine with tetrahydrofolate (THF) serving as the one-carbon carrier. This reaction serves as the major source of one-carbon groups required for the biosynthesis of purines, thymidylate, methionine, and other important biomolecules. Also exhibits THF-independent aldolase activity toward beta-hydroxyamino acids, producing glycine and aldehydes, via a retro-aldol mechanism. In Rhodopirellula baltica (strain DSM 10527 / NCIMB 13988 / SH1), this protein is Serine hydroxymethyltransferase.